A 319-amino-acid chain; its full sequence is Curved DNA-binding protein (319 aa).

A J domain is found at 5 to 69 (DYYKILGVEP…QKRAEFDEIR (65 aa)).

It localises to the cytoplasm. The protein resides in the nucleoid. In terms of biological role, DNA-binding protein that preferentially recognizes a curved DNA sequence. It is probably a functional analog of DnaJ; displays overlapping activities with DnaJ, but functions under different conditions, probably acting as a molecular chaperone in an adaptive response to environmental stresses other than heat shock. Lacks autonomous chaperone activity; binds native substrates and targets them for recognition by DnaK. Its activity is inhibited by the binding of CbpM. In Pseudomonas putida (strain ATCC 700007 / DSM 6899 / JCM 31910 / BCRC 17059 / LMG 24140 / F1), this protein is Curved DNA-binding protein.